We begin with the raw amino-acid sequence, 274 residues long: Shikimate dehydrogenase (NADP(+)) (274 aa).

Shikimate-binding positions include 20 to 22 (SKS) and threonine 68. Lysine 72 serves as the catalytic Proton acceptor. NADP(+) is bound at residue aspartate 84. Asparagine 93 and aspartate 109 together coordinate shikimate. Residues 131–135 (GAGGA) and leucine 217 contribute to the NADP(+) site. Tyrosine 219 provides a ligand contact to shikimate. NADP(+) is bound at residue glycine 240.

It belongs to the shikimate dehydrogenase family. In terms of assembly, homodimer.

The enzyme catalyses shikimate + NADP(+) = 3-dehydroshikimate + NADPH + H(+). The protein operates within metabolic intermediate biosynthesis; chorismate biosynthesis; chorismate from D-erythrose 4-phosphate and phosphoenolpyruvate: step 4/7. Involved in the biosynthesis of the chorismate, which leads to the biosynthesis of aromatic amino acids. Catalyzes the reversible NADPH linked reduction of 3-dehydroshikimate (DHSA) to yield shikimate (SA). The chain is Shikimate dehydrogenase (NADP(+)) from Sphingopyxis alaskensis (strain DSM 13593 / LMG 18877 / RB2256) (Sphingomonas alaskensis).